Here is a 715-residue protein sequence, read N- to C-terminus: Fatty acid oxidation complex subunit alpha (715 aa).

The segment at 1-190 (MIYEGKAITV…KVGAVDAVVA (190 aa)) is enoyl-CoA hydratase/isomerase. Asp-297 contributes to the substrate binding site. The tract at residues 312–715 (RDVKQAAVLG…MAKNGQSFFG (404 aa)) is 3-hydroxyacyl-CoA dehydrogenase. Residues Met-325, Asp-344, 401–403 (VVE), Lys-408, and Ser-430 contribute to the NAD(+) site. The active-site For 3-hydroxyacyl-CoA dehydrogenase activity is His-451. NAD(+) is bound at residue Asn-454. Substrate-binding residues include Asn-501 and Tyr-660.

In the N-terminal section; belongs to the enoyl-CoA hydratase/isomerase family. This sequence in the C-terminal section; belongs to the 3-hydroxyacyl-CoA dehydrogenase family. In terms of assembly, heterotetramer of two alpha chains (FadB) and two beta chains (FadA).

The enzyme catalyses a (3S)-3-hydroxyacyl-CoA + NAD(+) = a 3-oxoacyl-CoA + NADH + H(+). The catalysed reaction is a (3S)-3-hydroxyacyl-CoA = a (2E)-enoyl-CoA + H2O. It carries out the reaction a 4-saturated-(3S)-3-hydroxyacyl-CoA = a (3E)-enoyl-CoA + H2O. It catalyses the reaction (3S)-3-hydroxybutanoyl-CoA = (3R)-3-hydroxybutanoyl-CoA. The enzyme catalyses a (3Z)-enoyl-CoA = a 4-saturated (2E)-enoyl-CoA. The catalysed reaction is a (3E)-enoyl-CoA = a 4-saturated (2E)-enoyl-CoA. Its pathway is lipid metabolism; fatty acid beta-oxidation. Involved in the aerobic and anaerobic degradation of long-chain fatty acids via beta-oxidation cycle. Catalyzes the formation of 3-oxoacyl-CoA from enoyl-CoA via L-3-hydroxyacyl-CoA. It can also use D-3-hydroxyacyl-CoA and cis-3-enoyl-CoA as substrate. The sequence is that of Fatty acid oxidation complex subunit alpha from Pseudomonas fluorescens (strain SBW25).